Reading from the N-terminus, the 463-residue chain is Sodium-coupled neutral amino acid transporter 7 (463 aa).

Serine 28 is subject to Phosphoserine. Helical transmembrane passes span 56 to 76, 82 to 102, 130 to 150, 179 to 199, 206 to 226, 240 to 260, 283 to 303, 320 to 340, 372 to 392, 396 to 416, and 429 to 449; these read AVFI…PAAF, VAAG…GLVI, LCEI…LIII, FTIS…KEIG, SLSV…YIWP, ASWM…QCHV, AAMV…FLTF, VAVA…YPIL, VLQT…IPDI, ISVI…LCLI, and ASWW…AFIF.

This sequence belongs to the amino acid/polyamine transporter 2 family. As to quaternary structure, interacts with the mTORC1 complex; this interaction mediates the recruitment of mTORC1 to the lysosome and its subsequent activation.

It localises to the lysosome membrane. The protein localises to the cell projection. Its subcellular location is the axon. It catalyses the reaction L-asparagine(in) + Na(+)(in) = L-asparagine(out) + Na(+)(out). The enzyme catalyses L-glutamine(in) + Na(+)(in) = L-glutamine(out) + Na(+)(out). Symporter that selectively cotransports sodium ions and amino acids, such as L-glutamine and L-asparagine from the lysosome into the cytoplasm and may participates in mTORC1 activation. The transport activity requires an acidic lysosomal lumen. In Rattus norvegicus (Rat), this protein is Sodium-coupled neutral amino acid transporter 7.